The chain runs to 60 residues: Large ribosomal subunit protein uL30 (60 aa).

It belongs to the universal ribosomal protein uL30 family. Part of the 50S ribosomal subunit.

This Cutibacterium acnes (strain DSM 16379 / KPA171202) (Propionibacterium acnes) protein is Large ribosomal subunit protein uL30.